Reading from the N-terminus, the 1196-residue chain is Nucleolar protein 6 (1196 aa).

Disordered regions lie at residues M1 to P75 and K1140 to K1196. The segment covering H22 to H31 has biased composition (basic and acidic residues). Positions K1165–G1174 are enriched in basic residues.

The protein belongs to the NRAP family. In terms of assembly, part of the small subunit (SSU) processome, composed of more than 70 proteins and the RNA chaperone small nucleolar RNA (snoRNA) U3.

The protein localises to the nucleus. Its subcellular location is the nucleolus. It localises to the chromosome. Functionally, part of the small subunit (SSU) processome, first precursor of the small eukaryotic ribosomal subunit. During the assembly of the SSU processome in the nucleolus, many ribosome biogenesis factors, an RNA chaperone and ribosomal proteins associate with the nascent pre-rRNA and work in concert to generate RNA folding, modifications, rearrangements and cleavage as well as targeted degradation of pre-ribosomal RNA by the RNA exosome. The protein is Nucleolar protein 6 of Drosophila sechellia (Fruit fly).